The sequence spans 731 residues: Nucleolar GTP-binding protein 2 (731 aa).

M1 is modified (N-acetylmethionine). Positions M1 to R33 are disordered. A compositionally biased stretch (polar residues) spans S10–D22. A CP-type G domain is found at W207–P368. Residues G317–S324 and D361–V365 each bind GTP. Residues V481–S502 form a disordered region. Residue S504 is modified to Phosphoserine. Positions L555 to V589 are enriched in acidic residues. Disordered regions lie at residues L555–K594 and E630–Q731. Composition is skewed to basic and acidic residues over residues E630–P652 and Q662–N671. 2 stretches are compositionally biased toward basic residues: residues E681 to G695 and K721 to Q731.

This sequence belongs to the TRAFAC class YlqF/YawG GTPase family. NOG2 subfamily. As to quaternary structure, interacts with LYAR and RPL23A. Interacts with the nuclear importin-beta receptor and, at a lower extent, with importin-alpha. In terms of tissue distribution, widely expressed, with the highest expression level in testis.

It localises to the nucleus. Its subcellular location is the nucleolus. Functionally, GTPase that associates with pre-60S ribosomal subunits in the nucleolus and is required for their nuclear export and maturation. May promote cell proliferation possibly by increasing p53/TP53 protein levels, and consequently those of its downstream product CDKN1A/p21, and decreasing RPL23A protein levels. The chain is Nucleolar GTP-binding protein 2 (GNL2) from Homo sapiens (Human).